The chain runs to 486 residues: ATP synthase subunit beta (486 aa).

Residue 170–177 coordinates ATP; that stretch reads GGAGVGKT.

Belongs to the ATPase alpha/beta chains family. As to quaternary structure, F-type ATPases have 2 components, CF(1) - the catalytic core - and CF(0) - the membrane proton channel. CF(1) has five subunits: alpha(3), beta(3), gamma(1), delta(1), epsilon(1). CF(0) has three main subunits: a(1), b(2) and c(9-12). The alpha and beta chains form an alternating ring which encloses part of the gamma chain. CF(1) is attached to CF(0) by a central stalk formed by the gamma and epsilon chains, while a peripheral stalk is formed by the delta and b chains.

It localises to the cell membrane. It catalyses the reaction ATP + H2O + 4 H(+)(in) = ADP + phosphate + 5 H(+)(out). Produces ATP from ADP in the presence of a proton gradient across the membrane. The catalytic sites are hosted primarily by the beta subunits. This is ATP synthase subunit beta from Clavibacter sepedonicus (Clavibacter michiganensis subsp. sepedonicus).